A 597-amino-acid polypeptide reads, in one-letter code: uncharacterized protein (597 aa).

2 disordered regions span residues 165–197 (NSRA…IFSK) and 278–344 (ERSS…RGTL). Pro residues predominate over residues 169–178 (VPPPAPPNPP). The segment covering 179–189 (KMEKHMSHDTS) has biased composition (basic and acidic residues). The span at 293-313 (STEVSITSSSPSPSSSSSTST) shows a compositional bias: low complexity. The region spanning 402–465 (WSLDDVLLWL…LDDLSKIIEN (64 aa)) is the SAM domain. Residues 576-597 (EESQQKESSSSGISSSPQTPTE) form a disordered region. A compositionally biased stretch (low complexity) spans 581 to 597 (KESSSSGISSSPQTPTE).

This is an uncharacterized protein from Caenorhabditis elegans.